Here is a 155-residue protein sequence, read N- to C-terminus: 6,7-dimethyl-8-ribityllumazine synthase (155 aa).

5-amino-6-(D-ribitylamino)uracil is bound by residues F23, 57–59, and 81–83; these read AFE and AVI. (2S)-2-hydroxy-3-oxobutyl phosphate is bound at residue 86–87; it reads ST. H89 acts as the Proton donor in catalysis. F114 contributes to the 5-amino-6-(D-ribitylamino)uracil binding site. R128 is a (2S)-2-hydroxy-3-oxobutyl phosphate binding site.

This sequence belongs to the DMRL synthase family.

It carries out the reaction (2S)-2-hydroxy-3-oxobutyl phosphate + 5-amino-6-(D-ribitylamino)uracil = 6,7-dimethyl-8-(1-D-ribityl)lumazine + phosphate + 2 H2O + H(+). It participates in cofactor biosynthesis; riboflavin biosynthesis; riboflavin from 2-hydroxy-3-oxobutyl phosphate and 5-amino-6-(D-ribitylamino)uracil: step 1/2. Its function is as follows. Catalyzes the formation of 6,7-dimethyl-8-ribityllumazine by condensation of 5-amino-6-(D-ribitylamino)uracil with 3,4-dihydroxy-2-butanone 4-phosphate. This is the penultimate step in the biosynthesis of riboflavin. The chain is 6,7-dimethyl-8-ribityllumazine synthase from Desulfatibacillum aliphaticivorans.